A 351-amino-acid polypeptide reads, in one-letter code: Photosystem II D2 protein (351 aa).

The helical transmembrane segment at 39-59 (CAYLAVGGWLTGTTFVTSWYT) threads the bilayer. Histidine 116 contributes to the chlorophyll a binding site. The helical transmembrane segment at 123–139 (GFCLRQFEIARLVGLRP) threads the bilayer. Pheophytin a contacts are provided by glutamine 128 and asparagine 141. A helical membrane pass occupies residues 151–164 (VFVSVFLMYPLGQA). Histidine 196 contributes to the chlorophyll a binding site. Residues 206-226 (GALLCAIHGATVQNTLFEDGD) traverse the membrane as a helical segment. A plastoquinone contacts are provided by histidine 213 and phenylalanine 260. Histidine 213 contacts Fe cation. Histidine 267 contributes to the Fe cation binding site. Residues 277–293 (GLWTSAFGIVGLALNLR) form a helical membrane-spanning segment.

Belongs to the reaction center PufL/M/PsbA/D family. As to quaternary structure, PSII is composed of 1 copy each of membrane proteins PsbA, PsbB, PsbC, PsbD, PsbE, PsbF, PsbH, PsbI, PsbJ, PsbK, PsbL, PsbM, PsbT, PsbX, PsbY, PsbZ, Psb30/Ycf12, at least 3 peripheral proteins of the oxygen-evolving complex and a large number of cofactors. It forms dimeric complexes. The D1/D2 heterodimer binds P680, chlorophylls that are the primary electron donor of PSII, and subsequent electron acceptors. It shares a non-heme iron and each subunit binds pheophytin, quinone, additional chlorophylls, carotenoids and lipids. There is also a Cl(-1) ion associated with D1 and D2, which is required for oxygen evolution. The PSII complex binds additional chlorophylls, carotenoids and specific lipids. serves as cofactor.

It is found in the plastid. The protein resides in the chloroplast thylakoid membrane. The catalysed reaction is 2 a plastoquinone + 4 hnu + 2 H2O = 2 a plastoquinol + O2. In terms of biological role, photosystem II (PSII) is a light-driven water:plastoquinone oxidoreductase that uses light energy to abstract electrons from H(2)O, generating O(2) and a proton gradient subsequently used for ATP formation. It consists of a core antenna complex that captures photons, and an electron transfer chain that converts photonic excitation into a charge separation. The D1/D2 (PsbA/PsbD) reaction center heterodimer binds P680, the primary electron donor of PSII as well as several subsequent electron acceptors. D2 is needed for assembly of a stable PSII complex. In Pyropia yezoensis (Susabi-nori), this protein is Photosystem II D2 protein.